The sequence spans 489 residues: FK506-binding protein 4 (489 aa).

2 disordered regions span residues 40–157 (PDET…GLEL) and 199–378 (GNYV…TTGT). The span at 66 to 88 (MDIDESDDDYEEDSEEDSDDEEI) shows a compositional bias: acidic residues. The span at 93-109 (SDKEKARKLKEAAALKE) shows a compositional bias: basic and acidic residues. Composition is skewed to acidic residues over residues 110–125 (LEDE…DDEN), 143–157 (TDDD…GLEL), and 208–250 (GPSE…DELD). 3 stretches are compositionally biased toward basic and acidic residues: residues 267-282 (APKL…RTAD), 292-303 (MMAKDGKAKGAD), and 328-353 (EQKK…EAKK). The span at 362–378 (QGPTPSGQKPGETTTGT) shows a compositional bias: polar residues. The PPIase FKBP-type domain maps to 406 to 489 (VAMRYIGKLE…IFDVKLLEIK (84 aa)).

The protein belongs to the FKBP-type PPIase family. FKBP3/4 subfamily. In terms of assembly, binds to histones H3 and H4.

The protein resides in the nucleus. The catalysed reaction is [protein]-peptidylproline (omega=180) = [protein]-peptidylproline (omega=0). Inhibited by both FK506 and rapamycin. PPIase that acts as a histone chaperone. Histone proline isomerase that increases the rate of cis-trans isomerization at prolines on the histone H3 N-terminal tail. Proline isomerization influences H3 methylation thereby regulating gene expression. This is FK506-binding protein 4 (fpr4) from Aspergillus fumigatus (strain ATCC MYA-4609 / CBS 101355 / FGSC A1100 / Af293) (Neosartorya fumigata).